A 366-amino-acid chain; its full sequence is tRNA 2-selenouridine synthase (366 aa).

One can recognise a Rhodanese domain in the interval 12-135; sequence FLNDVPMMDA…MRTFLLDTLH (124 aa). The active-site S-selanylcysteine intermediate is the Cys95.

This sequence belongs to the SelU family. In terms of assembly, monomer.

It catalyses the reaction 5-methylaminomethyl-2-thiouridine(34) in tRNA + selenophosphate + (2E)-geranyl diphosphate + H2O + H(+) = 5-methylaminomethyl-2-selenouridine(34) in tRNA + (2E)-thiogeraniol + phosphate + diphosphate. The catalysed reaction is 5-methylaminomethyl-2-thiouridine(34) in tRNA + (2E)-geranyl diphosphate = 5-methylaminomethyl-S-(2E)-geranyl-thiouridine(34) in tRNA + diphosphate. The enzyme catalyses 5-methylaminomethyl-S-(2E)-geranyl-thiouridine(34) in tRNA + selenophosphate + H(+) = 5-methylaminomethyl-2-(Se-phospho)selenouridine(34) in tRNA + (2E)-thiogeraniol. It carries out the reaction 5-methylaminomethyl-2-(Se-phospho)selenouridine(34) in tRNA + H2O = 5-methylaminomethyl-2-selenouridine(34) in tRNA + phosphate. Functionally, involved in the post-transcriptional modification of the uridine at the wobble position (U34) of tRNA(Lys), tRNA(Glu) and tRNA(Gln). Catalyzes the conversion of 2-thiouridine (S2U-RNA) to 2-selenouridine (Se2U-RNA). Acts in a two-step process involving geranylation of 2-thiouridine (S2U) to S-geranyl-2-thiouridine (geS2U) and subsequent selenation of the latter derivative to 2-selenouridine (Se2U) in the tRNA chain. This chain is tRNA 2-selenouridine synthase, found in Pseudomonas syringae pv. tomato (strain ATCC BAA-871 / DC3000).